We begin with the raw amino-acid sequence, 339 residues long: D-erythrose-4-phosphate dehydrogenase (339 aa).

NAD(+) contacts are provided by residues 12–13 and arginine 81; that span reads RI. Substrate contacts are provided by residues 154-156, arginine 200, 213-214, and arginine 236; these read SCT and TK. Residue cysteine 155 is the Nucleophile of the active site. Asparagine 318 provides a ligand contact to NAD(+).

This sequence belongs to the glyceraldehyde-3-phosphate dehydrogenase family. Epd subfamily. Homotetramer.

It is found in the cytoplasm. The catalysed reaction is D-erythrose 4-phosphate + NAD(+) + H2O = 4-phospho-D-erythronate + NADH + 2 H(+). It participates in cofactor biosynthesis; pyridoxine 5'-phosphate biosynthesis; pyridoxine 5'-phosphate from D-erythrose 4-phosphate: step 1/5. Functionally, catalyzes the NAD-dependent conversion of D-erythrose 4-phosphate to 4-phosphoerythronate. The protein is D-erythrose-4-phosphate dehydrogenase of Escherichia fergusonii (strain ATCC 35469 / DSM 13698 / CCUG 18766 / IAM 14443 / JCM 21226 / LMG 7866 / NBRC 102419 / NCTC 12128 / CDC 0568-73).